We begin with the raw amino-acid sequence, 121 residues long: Large ribosomal subunit protein bL12 (121 aa).

Belongs to the bacterial ribosomal protein bL12 family. Homodimer. Part of the ribosomal stalk of the 50S ribosomal subunit. Forms a multimeric L10(L12)X complex, where L10 forms an elongated spine to which 2 to 4 L12 dimers bind in a sequential fashion. Binds GTP-bound translation factors.

Its function is as follows. Forms part of the ribosomal stalk which helps the ribosome interact with GTP-bound translation factors. Is thus essential for accurate translation. This is Large ribosomal subunit protein bL12 from Baumannia cicadellinicola subsp. Homalodisca coagulata.